Consider the following 123-residue polypeptide: Amoebiasin-2 (123 aa).

Residues 1–16 (MKQFIFFALLCTSTYA) form the signal peptide. The BC loop motif lies at 45–50 (NPSTGY). Positions 71–81 (EPHPSGMVGFP) match the DE loop motif. The FG loop signature appears at 105–114 (PWEKGKEPLR).

This sequence belongs to the protease inhibitor I42 family. In terms of assembly, monomer. May form homodimer. Interacts with cysteine protease CP2. Interacts with cysteine protease CP5.

The protein resides in the cytoplasmic vesicle. It localises to the lysosome. Its subcellular location is the phagosome. In terms of biological role, cysteine protease inhibitor. Inhibits cysteine proteases CP1, CP2 and to a lesser extent CP5. The polypeptide is Amoebiasin-2 (Entamoeba histolytica (strain ATCC 30459 / HM-1:IMSS / ABRM)).